The chain runs to 357 residues: Cinnamyl alcohol dehydrogenase 1 (357 aa).

Residue cysteine 47 coordinates Zn(2+). Threonine 49 contributes to the NADP(+) binding site. Histidine 69, glutamate 70, cysteine 100, cysteine 103, cysteine 106, cysteine 114, and cysteine 163 together coordinate Zn(2+). Residues threonine 167, 188–193, 211–216, threonine 251, glycine 275, and 298–300 contribute to the NADP(+) site; these read GLGGVG, SSSDKK, and SFI.

It belongs to the zinc-containing alcohol dehydrogenase family. In terms of assembly, homodimer. Zn(2+) is required as a cofactor. Expressed in leaves, mainly in peltate glands.

It carries out the reaction (E)-cinnamyl alcohol + NADP(+) = (E)-cinnamaldehyde + NADPH + H(+). It catalyses the reaction (E)-coniferol + NADP(+) = (E)-coniferaldehyde + NADPH + H(+). The enzyme catalyses (E)-sinapyl alcohol + NADP(+) = (E)-sinapaldehyde + NADPH + H(+). The catalysed reaction is (E)-4-coumaroyl alcohol + NADP(+) = (E)-4-coumaraldehyde + NADPH + H(+). It carries out the reaction (E)-caffeyl alcohol + NADP(+) = (E)-caffeyl aldehyde + NADPH + H(+). Its pathway is aromatic compound metabolism; phenylpropanoid biosynthesis. Its activity is regulated as follows. 60% inhibition by 5 mM Ca(+), Mg(+) or Cu(+). Involved in the production of citral, a mixture of geranial and neral with a strong lemony scent. Reversibly oxidizes geraniol to produce geranial at half the efficiency compared with its activity with cinnamyl alcohol. Does not use nerol and neral as substrates. The protein is Cinnamyl alcohol dehydrogenase 1 (CAD1) of Ocimum basilicum (Sweet basil).